Reading from the N-terminus, the 170-residue chain is Cyclic pyranopterin monophosphate synthase (170 aa).

Residues 1 to 25 (MADPSTLTHPDPEGGVRMMDASQKS) form a disordered region. Substrate is bound by residues 78–80 (LCH) and 116–117 (ME). Asp-131 is an active-site residue.

This sequence belongs to the MoaC family. Homohexamer; trimer of dimers.

The enzyme catalyses (8S)-3',8-cyclo-7,8-dihydroguanosine 5'-triphosphate = cyclic pyranopterin phosphate + diphosphate. It functions in the pathway cofactor biosynthesis; molybdopterin biosynthesis. In terms of biological role, catalyzes the conversion of (8S)-3',8-cyclo-7,8-dihydroguanosine 5'-triphosphate to cyclic pyranopterin monophosphate (cPMP). The chain is Cyclic pyranopterin monophosphate synthase from Salinibacter ruber (strain DSM 13855 / M31).